A 729-amino-acid polypeptide reads, in one-letter code: Fatty acid oxidation complex subunit alpha (729 aa).

The segment at M1–K189 is enoyl-CoA hydratase/isomerase. D296 contributes to the substrate binding site. The interval E311 to A729 is 3-hydroxyacyl-CoA dehydrogenase. Residues M324, D343, V400–E402, K407, and S429 each bind NAD(+). The active-site For 3-hydroxyacyl-CoA dehydrogenase activity is the H450. N453 provides a ligand contact to NAD(+). N500 and Y660 together coordinate substrate. The disordered stretch occupies residues R708 to A729.

This sequence in the N-terminal section; belongs to the enoyl-CoA hydratase/isomerase family. The protein in the C-terminal section; belongs to the 3-hydroxyacyl-CoA dehydrogenase family. As to quaternary structure, heterotetramer of two alpha chains (FadB) and two beta chains (FadA).

The catalysed reaction is a (3S)-3-hydroxyacyl-CoA + NAD(+) = a 3-oxoacyl-CoA + NADH + H(+). It catalyses the reaction a (3S)-3-hydroxyacyl-CoA = a (2E)-enoyl-CoA + H2O. It carries out the reaction a 4-saturated-(3S)-3-hydroxyacyl-CoA = a (3E)-enoyl-CoA + H2O. The enzyme catalyses (3S)-3-hydroxybutanoyl-CoA = (3R)-3-hydroxybutanoyl-CoA. The catalysed reaction is a (3Z)-enoyl-CoA = a 4-saturated (2E)-enoyl-CoA. It catalyses the reaction a (3E)-enoyl-CoA = a 4-saturated (2E)-enoyl-CoA. The protein operates within lipid metabolism; fatty acid beta-oxidation. Its function is as follows. Involved in the aerobic and anaerobic degradation of long-chain fatty acids via beta-oxidation cycle. Catalyzes the formation of 3-oxoacyl-CoA from enoyl-CoA via L-3-hydroxyacyl-CoA. It can also use D-3-hydroxyacyl-CoA and cis-3-enoyl-CoA as substrate. The protein is Fatty acid oxidation complex subunit alpha of Salmonella agona (strain SL483).